A 209-amino-acid polypeptide reads, in one-letter code: Inorganic pyrophosphatase (209 aa).

Positions 38, 52, and 64 each coordinate substrate. Positions 92, 97, and 130 each coordinate Mg(2+). Residue Tyr-167 participates in substrate binding.

It belongs to the PPase family. In terms of assembly, homohexamer. Mg(2+) serves as cofactor.

The protein resides in the cytoplasm. It catalyses the reaction diphosphate + H2O = 2 phosphate + H(+). Its function is as follows. Catalyzes the hydrolysis of inorganic pyrophosphate (PPi) forming two phosphate ions. This Chlamydia muridarum (strain MoPn / Nigg) protein is Inorganic pyrophosphatase.